Consider the following 268-residue polypeptide: Phosphate import ATP-binding protein PstB 3 (268 aa).

Residues 15–254 form the ABC transporter domain; sequence LRTENLNVYY…DATESIFNNP (240 aa). An ATP-binding site is contributed by 47–54; that stretch reads GPSGCGKS.

Belongs to the ABC transporter superfamily. Phosphate importer (TC 3.A.1.7) family. As to quaternary structure, the complex is composed of two ATP-binding proteins (PstB), two transmembrane proteins (PstC and PstA) and a solute-binding protein (PstS).

It is found in the cell inner membrane. The catalysed reaction is phosphate(out) + ATP + H2O = ADP + 2 phosphate(in) + H(+). In terms of biological role, part of the ABC transporter complex PstSACB involved in phosphate import. Responsible for energy coupling to the transport system. The polypeptide is Phosphate import ATP-binding protein PstB 3 (Nostoc sp. (strain PCC 7120 / SAG 25.82 / UTEX 2576)).